An 89-amino-acid chain; its full sequence is Small ribosomal subunit protein uS15 (89 aa).

It belongs to the universal ribosomal protein uS15 family. Part of the 30S ribosomal subunit. Forms a bridge to the 50S subunit in the 70S ribosome, contacting the 23S rRNA.

Functionally, one of the primary rRNA binding proteins, it binds directly to 16S rRNA where it helps nucleate assembly of the platform of the 30S subunit by binding and bridging several RNA helices of the 16S rRNA. Its function is as follows. Forms an intersubunit bridge (bridge B4) with the 23S rRNA of the 50S subunit in the ribosome. This is Small ribosomal subunit protein uS15 from Xanthobacter autotrophicus (strain ATCC BAA-1158 / Py2).